We begin with the raw amino-acid sequence, 145 residues long: MSAQKMTNEQILKYVQSKQIRKDIPEFRSGDTIIVHNKIIENNKSRIQKFEGVVIRRRGSGLSETIIVRKESSGIGVERIFQLHSPQIEKIEVIRLGKVRRAYLTYLRERSGKSARIKERRPAKAVEKTSKPASAKKPAAKANKK.

Residues 112-130 (GKSARIKERRPAKAVEKTS) are compositionally biased toward basic and acidic residues. The segment at 112–145 (GKSARIKERRPAKAVEKTSKPASAKKPAAKANKK) is disordered.

The protein belongs to the bacterial ribosomal protein bL19 family.

This protein is located at the 30S-50S ribosomal subunit interface and may play a role in the structure and function of the aminoacyl-tRNA binding site. The polypeptide is Large ribosomal subunit protein bL19 (Malacoplasma penetrans (strain HF-2) (Mycoplasma penetrans)).